The primary structure comprises 402 residues: Nicotinate phosphoribosyltransferase (402 aa).

Residue histidine 224 is modified to Phosphohistidine; by autocatalysis.

This sequence belongs to the NAPRTase family. In terms of processing, transiently phosphorylated on a His residue during the reaction cycle. Phosphorylation strongly increases the affinity for substrates and increases the rate of nicotinate D-ribonucleotide production. Dephosphorylation regenerates the low-affinity form of the enzyme, leading to product release.

It carries out the reaction nicotinate + 5-phospho-alpha-D-ribose 1-diphosphate + ATP + H2O = nicotinate beta-D-ribonucleotide + ADP + phosphate + diphosphate. The protein operates within cofactor biosynthesis; NAD(+) biosynthesis; nicotinate D-ribonucleotide from nicotinate: step 1/1. Functionally, catalyzes the synthesis of beta-nicotinate D-ribonucleotide from nicotinate and 5-phospho-D-ribose 1-phosphate at the expense of ATP. This Neisseria meningitidis serogroup C (strain 053442) protein is Nicotinate phosphoribosyltransferase.